The following is a 907-amino-acid chain: MATPDQKSPNVLLQNLCCRILGRSEADVAQQFQYAVRVIGSNFAPTVERDEFLVAEKIKKELIRQRREADAALFSELHRKLHSQGVLKNKWSILYLLLSLSEDPRRQPSKVSSYATLFAQALPRDAHSTPYYYARPQTLPLSYQDRSAQSAQSSGSVGSSGISSIGLCALSGPAPAPQSLLPGQSNQAPGVGDCLRQQLGSRLAWTLTANQPSSQATTSKGVPSAVSRNMTRSRREGDTGGTMEITEAALVRDILYVFQGIDGKNIKMNNTENCYKVEGKANLSRSLRDTAVRLSELGWLHNKIRRYTDQRSLDRSFGLVGQSFCAALHQELREYYRLLSVLHSQLQLEDDQGVNLGLESSLTLRRLLVWTYDPKIRLKTLAALVDHCQGRKGGELASAVHAYTKTGDPYMRSLVQHILSLVSHPVLSFLYRWIYDGELEDTYHEFFVASDPTVKTDRLWHDKYTLRKSMIPSFMTMDQSRKVLLIGKSINFLHQVCHDQTPTTKMIAVTKSAESPQDAADLFTDLENAFQGKIDAAYFETSKYLLDVLNKKYSLLDHMQAMRRYLLLGQGDFIRHLMDLLKPELVRPATTLYQHNLTGILETAVRATNAQFDSPEILRRLDVRLLEVSPGDTGWDVFSLDYHVDGPIATVFTRECMSHYLRVFNFLWRAKRMEYILTDIRKGHMCNAKLLRNMPEFSGVLHQCHILASEMVHFIHQMQYYITFEVLECSWDELWNKVQQAQDLDHIIAAHEVFLDTIISRCLLDSDSRALLNQLRAVFDQIIELQNAQDAIYRAALEELQRRLQFEEKKKQREIEGQWGVTAAEEEEENKRIGEFKESIPKMCSQLRILTHFYQGIVQQFLVLLTTSSDESLRFLSFRLDFNEHYKAREPRLRVSLGTRGRRSSHT.

Ala2 carries the N-acetylalanine modification. A Phosphoserine modification is found at Ser113. The span at 210–230 shows a compositional bias: polar residues; sequence NQPSSQATTSKGVPSAVSRNM. A disordered region spans residues 210–241; it reads NQPSSQATTSKGVPSAVSRNMTRSRREGDTGG.

Belongs to the TUBGCP family. As to quaternary structure, component of the gamma-tubulin ring complex (gTuRC) consisting of TUBGCP2, TUBGCP3, TUBGCP4, TUBGCP5 and TUBGCP6 and gamma-tubulin TUBG1 or TUBG2. TUBGCP2, TUBGCP3, TUBGCP4, TUBGCP5 and TUBGCP6 assemble in a 5:5:2:1:1 stoichiometry; each is associated with a gamma-tubulin, thereby arranging 14 gamma-tubulins in a helical manner. Gamma-tubulin at the first position is blocked by TUBGCP3 at the last position, allowing 13 protafilaments to grow into a microtubule. The gTuRC (via TUBGCP3 and TUBGCP6) interacts with ACTB and MZT1; the interactions form a luminal bridge that stabilizes the initial structure during complex assembly. The gTuRC (via TUBGCP2) interacts with MZT2A/MZT2B and CDK5RAP2 (via CM1 motif); the interactions play a role in gTuRC activation. Interacts with NIN (via N-terminus); the interaction may promote recruitment of the gamma-tubulin ring complex to the centrosome. As to expression, ubiquitously expressed.

It localises to the cytoplasm. The protein resides in the cytoskeleton. Its subcellular location is the microtubule organizing center. The protein localises to the centrosome. Its function is as follows. Component of the gamma-tubulin ring complex (gTuRC) which mediates microtubule nucleation. The gTuRC regulates the minus-end nucleation of alpha-beta tubulin heterodimers that grow into microtubule protafilaments, a critical step in centrosome duplication and spindle formation. The sequence is that of Gamma-tubulin complex component 3 (TUBGCP3) from Homo sapiens (Human).